Here is a 416-residue protein sequence, read N- to C-terminus: MLQHHQQQAQSGGYYDHYTQSPSPGSLTNADALNTTPFSVKDILNMVNQTEAYEGSYGHIDGAATASALFAAGEYQNPHQYLNHQQHQQSELPIPQQQLHHQHLDDGATTSSSLSPLLPPPPHQLYGGYQDYGMPAHMFQHHHGHPHQSFQHSASAYNMSASQFYAGASATAYQTPATYNYNYAGSGEVYGGATPSAVGIKSEYIPTPYVTPSPTLDLNSSAEVDSLQAPTQKLCVNPLSQRLMETASNSSSLRSIYGSDEGAKKKDNSQVTSSRSELRKNSISGNSNPGSNSGSTKPRMKRKPRVLFSQAQVLELECRFRLKKYLTGAEREIIAQKLNLSATQVKIWFQNRRYKSKRGDIDCEGIAKHLKLKSEPLDSPTSLPPPIPNHVMWPPTMQQSQQQQQHHAQQQQMQHM.

2 stretches are compositionally biased toward polar residues: residues 1-11 (MLQHHQQQAQS) and 18-33 (YTQS…ADAL). Disordered regions lie at residues 1–33 (MLQH…ADAL), 246–305 (TASN…RKPR), and 391–416 (VMWP…MQHM). A compositionally biased stretch (low complexity) spans 281–295 (NSISGNSNPGSNSGS). A DNA-binding region (homeobox) is located at residues 301–360 (KRKPRVLFSQAQVLELECRFRLKKYLTGAEREIIAQKLNLSATQVKIWFQNRRYKSKRGD). The span at 397-416 (MQQSQQQQQHHAQQQQMQHM) shows a compositional bias: low complexity.

The protein localises to the nucleus. Its function is as follows. Required for the development of heart and visceral muscle; for the formation of somatic muscles. Has a crucial function in the early mesodermal subdivisions. This is Muscle-specific homeobox protein tinman (tin) from Drosophila melanogaster (Fruit fly).